We begin with the raw amino-acid sequence, 1500 residues long: Carbamoyl-phosphate synthase [ammonia], mitochondrial (1500 aa).

The transit peptide at 1–38 (MTRILTACKVVKTLKSGFGFANVTTKRQWDFSRPGIRL) directs the protein to the mitochondrion. An anthranilate phosphoribosyltransferase homolog region spans residues 39–218 (LSVKAKTAHI…VKVFGKGNPT (180 aa)). An N6-acetyllysine; alternate mark is found at K44, K55, K57, and K119. 4 positions are modified to N6-succinyllysine; alternate: K44, K55, K57, and K119. K55 carries the post-translational modification N6-glutaryllysine; alternate. Phosphoserine is present on S148. An N6-acetyllysine; alternate mark is found at K157 and K171. K157 is modified (N6-succinyllysine; alternate). K171 is subject to N6-glutaryllysine; alternate. K176 is modified (N6-glutaryllysine). At K182 the chain carries N6-acetyllysine. Phosphoserine is present on S189. Position 197 is an N6-acetyllysine (K197). N6-acetyllysine; alternate is present on residues K207, K210, K214, K219, and K228. The residue at position 207 (K207) is an N6-succinyllysine; alternate. An N6-glutaryllysine; alternate mark is found at K207, K210, K214, K219, and K228. K214 carries the post-translational modification N6-succinyllysine; alternate. Residues 219–404 (KVVAVDCGIK…FSLIKKGKGT (186 aa)) form the Glutamine amidotransferase type-1 domain. At K237 the chain carries N6-glutaryllysine. An N6-acetyllysine modification is found at K279. N6-acetyllysine; alternate is present on residues K280, K287, K307, and K310. Residue K280 is modified to N6-glutaryllysine; alternate. Residues K287 and K307 each carry the N6-succinyllysine; alternate modification. N6-glutaryllysine; alternate occurs at positions 307 and 310. Position 400 is an N6-succinyllysine (K400). N6-succinyllysine; alternate occurs at positions 402 and 412. 4 positions are modified to N6-glutaryllysine; alternate: K402, K412, K453, and K458. 6 positions are modified to N6-acetyllysine; alternate: K412, K453, K458, K522, K527, and K532. An N6-succinyllysine; alternate mark is found at K458, K522, and K527. 2 positions are modified to N6-glutaryllysine; alternate: K527 and K532. Phosphoserine; alternate is present on S537. An O-linked (GlcNAc) serine; alternate glycan is attached at S537. S540 bears the Phosphoserine mark. In terms of domain architecture, ATP-grasp 1 spans 551 to 743 (SDKLNEINEK…LAFIAAKIAL (193 aa)). N6-acetyllysine; alternate is present on residues K553 and K560. 2 positions are modified to N6-succinyllysine; alternate: K553 and K560. K553 carries the N6-glutaryllysine; alternate modification. S569 bears the Phosphoserine mark. N6-acetyllysine; alternate occurs at positions 575, 603, and 612. 3 positions are modified to N6-succinyllysine; alternate: K575, K603, and K612. An N6-acetyllysine modification is found at K630. An N6-glutaryllysine modification is found at K728. 12 positions are modified to N6-acetyllysine; alternate: K751, K757, K772, K793, K811, K831, K840, K841, K856, K875, K889, and K892. 2 positions are modified to N6-succinyllysine; alternate: K751 and K757. 4 positions are modified to N6-glutaryllysine; alternate: K757, K772, K793, and K811. An N6-succinyllysine; alternate modification is found at K793. An N6-succinyllysine; alternate mark is found at K831 and K840. Residues K841, K856, K875, K889, and K892 each carry the N6-glutaryllysine; alternate modification. N6-succinyllysine; alternate occurs at positions 875, 889, and 892. Phosphoserine occurs at positions 896 and 898. N6-acetyllysine; alternate is present on residues K908, K915, and K919. N6-glutaryllysine; alternate is present on residues K908, K915, and K919. 2 positions are modified to N6-succinyllysine; alternate: K915 and K919. K935 carries the N6-acetyllysine modification. Residue S1036 is modified to Phosphoserine. N6-acetyllysine; alternate is present on K1074. K1074 is modified (N6-succinyllysine; alternate). At K1074 the chain carries N6-glutaryllysine; alternate. Phosphoserine is present on residues S1079, S1090, and S1093. The 192-residue stretch at 1093–1284 (SAVLDELKVA…FIDVATKVMI (192 aa)) folds into the ATP-grasp 2 domain. K1100 bears the N6-acetyllysine; alternate mark. K1100 bears the N6-succinyllysine; alternate mark. K1149 is modified (N6-succinyllysine). K1168 and K1183 each carry N6-acetyllysine; alternate. 2 positions are modified to N6-succinyllysine; alternate: K1168 and K1183. N6-glutaryllysine; alternate is present on residues K1168 and K1183. At S1203 the chain carries Phosphoserine. N6-acetyllysine is present on K1222. K1224 is subject to N6-glutaryllysine. N6-acetyllysine; alternate is present on residues K1232, K1269, and K1291. N6-succinyllysine; alternate is present on residues K1232, K1269, and K1291. A glycan (O-linked (GlcNAc) serine) is linked at S1331. A glycan (O-linked (GlcNAc) threonine) is linked at T1332. The region spanning 1355-1500 (FKIPQKGILI…YRQYSAGKAA (146 aa)) is the MGS-like domain. Position 1356 is an N6-acetyllysine; alternate (K1356). K1356 and K1360 each carry N6-succinyllysine; alternate. 2 positions are modified to N6-glutaryllysine; alternate: K1356 and K1360. N-acetyl-L-glutamate-binding residues include T1391, T1394, and W1410. Phosphoserine occurs at positions 1419 and 1431. N1437 and N1440 together coordinate N-acetyl-L-glutamate. K1444 carries the N6-acetyllysine; alternate modification. An N6-succinyllysine; alternate modification is found at K1444. N-acetyl-L-glutamate is bound at residue N1449. N6-acetyllysine; alternate occurs at positions 1471, 1479, and 1486. K1471, K1479, and K1486 each carry N6-succinyllysine; alternate. An N6-glutaryllysine; alternate mark is found at K1479 and K1486.

In terms of assembly, can form homooligomers (monomers as predominant form and dimers). As to quaternary structure, (Microbial infection) Interacts with P.berghei (ANKA strain) phospholipid scramblase PLSCR; the interaction is involved in the interaction between parasite sporozoites and host hepatocytes. In terms of processing, undergoes proteolytic cleavage in the C-terminal region corresponding to the loss of approximately 12 AA residues from the C-terminus. Post-translationally, acetylation of Lys-287, Lys-603, Lys-841 and Lys-1291 is observed in liver mitochondria from fasted mice but not from fed mice. Succinylated at Lys-44, Lys-287 and Lys-1291. Desuccinylated at Lys-1291 by SIRT5, leading to activation. In terms of processing, glutarylated. Glutarylation levels increase during fasting. Deglutarylated by SIRT5 at Lys-55, Lys-219, Lys-412, Lys-889, Lys-892, Lys-915, Lys-1360 and Lys-1486, leading to activation. In terms of tissue distribution, expressed in hepatocytes (at protein level).

The protein resides in the mitochondrion. It is found in the nucleus. Its subcellular location is the nucleolus. The protein localises to the cell membrane. It carries out the reaction hydrogencarbonate + NH4(+) + 2 ATP = carbamoyl phosphate + 2 ADP + phosphate + 2 H(+). With respect to regulation, requires N-acetyl-L-glutamate (NAG) as an allosteric activator. Its function is as follows. Involved in the urea cycle of ureotelic animals where the enzyme plays an important role in removing excess ammonia from the cell. This is Carbamoyl-phosphate synthase [ammonia], mitochondrial (Cps1) from Mus musculus (Mouse).